We begin with the raw amino-acid sequence, 316 residues long: Melanocyte-stimulating hormone receptor (316 aa).

Residues 1 to 37 (MPMQGAHRKLLGSLNSTPTATSNLGLAANHTGAPCLE) are Extracellular-facing. The N-linked (GlcNAc...) asparagine glycan is linked to N29. Residues 38–63 (VSIPDGLFLSLGLVSLVENVLVVAAI) traverse the membrane as a helical segment. Topologically, residues 64–72 (AKNRNLHSS) are cytoplasmic. A helical membrane pass occupies residues 73 to 93 (MYCFICCLALSDLLVSGSNML). At 94 to 118 (ETAVILLLEAGALATRTSVVQQLHN) the chain is on the extracellular side. Residues 119–140 (TIDVLTCSSMLCSLCFLGAIAV) traverse the membrane as a helical segment. Topologically, residues 141–163 (DRYISIFYALRYHSIMTLPRAQR) are cytoplasmic. A helical transmembrane segment spans residues 164–183 (AIAAIWVASVLSSTLFITYY). Residues 184-191 (DHAAVLLC) lie on the Extracellular side of the membrane. A helical membrane pass occupies residues 192-211 (LVVFFLAMLVLMAVLYVHML). The Cytoplasmic segment spans residues 212-240 (ARACQHAHGIIRLHKRQSPAHQGFGLRGA). A helical membrane pass occupies residues 241–266 (ATLTILLGIFFLCWGPFFLHLTLVVF). Over 267-279 (CPQHLTCSCIFKN) the chain is Extracellular. Residues 280–300 (FKVFLTLIICNTIIDPLIYAF) form a helical membrane-spanning segment. Residues 301–316 (RSQELRRTLKEVLCSW) are Cytoplasmic-facing. Residue C314 is the site of S-palmitoyl cysteine attachment.

It belongs to the G-protein coupled receptor 1 family. Interacts with MGRN1, but does not undergo MGRN1-mediated ubiquitination; this interaction competes with GNAS-binding and thus inhibits agonist-induced cAMP production. Interacts with OPN3; the interaction results in a decrease in MC1R-mediated cAMP signaling and ultimately a decrease in melanin production in melanocytes.

It is found in the cell membrane. Functionally, receptor for MSH (alpha, beta and gamma) and ACTH. The activity of this receptor is mediated by G proteins which activate adenylate cyclase. Mediates melanogenesis, the production of eumelanin (black/brown) and phaeomelanin (red/yellow), via regulation of cAMP signaling in melanocytes. The protein is Melanocyte-stimulating hormone receptor (MC1R) of Leontocebus fuscicollis (Brown-mantled tamarin).